The following is a 170-amino-acid chain: Photosystem I assembly protein Ycf3 (170 aa).

TPR repeat units lie at residues 35–68, 72–105, and 120–153; these read AFTY…EIDP, SYIL…NPFL, and GEQA…TPGN.

Belongs to the Ycf3 family.

Its subcellular location is the plastid. The protein localises to the chloroplast thylakoid membrane. Functionally, essential for the assembly of the photosystem I (PSI) complex. May act as a chaperone-like factor to guide the assembly of the PSI subunits. This Agrostis stolonifera (Creeping bentgrass) protein is Photosystem I assembly protein Ycf3.